Reading from the N-terminus, the 333-residue chain is Flap endonuclease 1 (333 aa).

An N-domain region spans residues Met-1 to Arg-99. Mg(2+)-binding residues include Asp-28, Asp-81, Glu-153, Glu-155, Asp-174, Asp-176, and Asp-235. The I-domain stretch occupies residues Glu-117 to Gly-256. The segment at Gly-325–Phe-333 is interaction with PCNA.

Belongs to the XPG/RAD2 endonuclease family. FEN1 subfamily. Interacts with PCNA. PCNA stimulates the nuclease activity without altering cleavage specificity. It depends on Mg(2+) as a cofactor.

Functionally, structure-specific nuclease with 5'-flap endonuclease and 5'-3' exonuclease activities involved in DNA replication and repair. During DNA replication, cleaves the 5'-overhanging flap structure that is generated by displacement synthesis when DNA polymerase encounters the 5'-end of a downstream Okazaki fragment. Binds the unpaired 3'-DNA end and kinks the DNA to facilitate 5' cleavage specificity. Cleaves one nucleotide into the double-stranded DNA from the junction in flap DNA, leaving a nick for ligation. Also involved in the base excision repair (BER) pathway. Acts as a genome stabilization factor that prevents flaps from equilibrating into structures that lead to duplications and deletions. Also possesses 5'-3' exonuclease activity on nicked or gapped double-stranded DNA. The sequence is that of Flap endonuclease 1 from Methanoregula boonei (strain DSM 21154 / JCM 14090 / 6A8).